The chain runs to 255 residues: Sporulation-specific N-acetylmuramoyl-L-alanine amidase (255 aa).

The region spanning 4 to 172 (IFIDPGHGGS…LARGHANGLE (169 aa)) is the MurNAc-LAA domain. The Zn(2+) site is built by histidine 10, glutamate 24, and histidine 79. The active site involves glutamate 141. Residues 180–254 (TSSSGLYKVQ…AGFDAIVILE (75 aa)) enclose the SPOR domain. Tandem repeats lie at residues 184–219 (GLYK…LLKD) and 220–255 (GLYK…ILES). The 2 X 35 AA approximate tandem repeats stretch occupies residues 184-255 (GLYKVQIGAF…GFDAIVILES (72 aa)).

The protein belongs to the N-acetylmuramoyl-L-alanine amidase 3 family. Zn(2+) serves as cofactor.

It is found in the secreted. The protein resides in the cell wall. It catalyses the reaction Hydrolyzes the link between N-acetylmuramoyl residues and L-amino acid residues in certain cell-wall glycopeptides.. With respect to regulation, inhibited by EDTA. Autolysins are involved in some important biological processes such as cell separation, cell-wall turnover, competence for genetic transformation, formation of the flagella - in particular of its basal body - and sporulation. CwlC is able to hydrolyze type A cell walls such as B.subtilis. Its main function is to lyze the mother cell wall peptidoglycan, playing a role during sporulation. The protein is Sporulation-specific N-acetylmuramoyl-L-alanine amidase (cwlC) of Bacillus subtilis (strain 168).